The primary structure comprises 1199 residues: Tubulin-specific chaperone D (1199 aa).

Disordered stretches follow at residues 1–23 and 337–361; these read MALSEEPAAGAAEDPVEDPVEDA and QHSIQNPREPVTQAETPDSDGQDDV. Residues 14 to 23 show a composition bias toward acidic residues; that stretch reads DPVEDPVEDA. HEAT repeat units lie at residues 368 to 406, 603 to 639, 757 to 793, and 1111 to 1147; these read VIEQLLVGLKDKDTIVRWSAAKGIGRMAGRLPKELADDV, EHTAREVFPRLLSMTQSPDLHTRHGAVLACAEVARSL, AAAQEELVKLYLAELQSPEEMTRCGCALALGALPAFF, and GDVRRKVLLQLFLLLCHPFPVIRKNTASQVYEMVLTY.

The protein belongs to the TBCD family. In terms of assembly, found in a complex with at least ARL2, PPP2CB, PPP2R1A, PPP2R2A, PPP2R5E and TBCD. Interacts with PPP2CB. Part of a supercomplex made of cofactors A to E. Cofactors A and D function by capturing and stabilizing tubulin in a quasi-native conformation. Cofactor E binds to the cofactor D-tubulin complex; interaction with cofactor C then causes the release of tubulin polypeptides that are committed to the native state. Interacts with ARL2; interaction is enhanced with the GDP-bound form of ARL2. Does not interact with ARL3, ARL4A and ARL4D. Interacts with beta tubulin. Interacts with TBCE.

It is found in the cell junction. Its subcellular location is the tight junction. It localises to the lateral cell membrane. The protein resides in the cytoplasm. The protein localises to the adherens junction. It is found in the cytoskeleton. Its subcellular location is the microtubule organizing center. It localises to the centrosome. Functionally, tubulin-folding protein implicated in the first step of the tubulin folding pathway and required for tubulin complex assembly. Involved in the regulation of microtubule polymerization or depolymerization, it modulates microtubule dynamics by capturing GTP-bound beta-tubulin (TUBB). Its ability to interact with beta tubulin is regulated via its interaction with ARL2. Acts as a GTPase-activating protein (GAP) for ARL2. Induces microtubule disruption in absence of ARL2. Increases degradation of beta tubulin, when overexpressed in polarized cells. Promotes epithelial cell detachment, a process antagonized by ARL2. Induces tight adherens and tight junctions disassembly at the lateral cell membrane. Required for correct assembly and maintenance of the mitotic spindle, and proper progression of mitosis. Involved in neuron morphogenesis. The sequence is that of Tubulin-specific chaperone D (TBCD) from Bos taurus (Bovine).